Consider the following 400-residue polypeptide: Acetate kinase (400 aa).

Asparagine 7 serves as a coordination point for Mg(2+). An ATP-binding site is contributed by lysine 14. Substrate is bound at residue arginine 90. Aspartate 147 (proton donor/acceptor) is an active-site residue. ATP contacts are provided by residues 207-211 (HLGNG), 282-284 (DFR), and 331-335 (GIGEN). Glutamate 384 is a Mg(2+) binding site.

The protein belongs to the acetokinase family. Homodimer. Mg(2+) serves as cofactor. It depends on Mn(2+) as a cofactor.

It localises to the cytoplasm. It carries out the reaction acetate + ATP = acetyl phosphate + ADP. It participates in metabolic intermediate biosynthesis; acetyl-CoA biosynthesis; acetyl-CoA from acetate: step 1/2. Its function is as follows. Catalyzes the formation of acetyl phosphate from acetate and ATP. Can also catalyze the reverse reaction. In Thermoanaerobacterium thermosaccharolyticum (strain ATCC 7956 / DSM 571 / NCIMB 9385 / NCA 3814 / NCTC 13789 / WDCM 00135 / 2032) (Clostridium thermosaccharolyticum), this protein is Acetate kinase.